A 40-amino-acid polypeptide reads, in one-letter code: Photosystem II reaction center protein Psb30 (40 aa).

A helical membrane pass occupies residues 12–32; the sequence is VIFQLTSVALIIIAGPAVIFV.

It belongs to the Psb30/Ycf12 family. In terms of assembly, PSII is composed of 1 copy each of membrane proteins PsbA, PsbB, PsbC, PsbD, PsbE, PsbF, PsbH, PsbI, PsbJ, PsbK, PsbL, PsbM, PsbT, PsbX, PsbY, PsbZ, Psb30/Ycf12, peripheral proteins PsbO, CyanoQ (PsbQ), PsbU, PsbV and a large number of cofactors. It forms dimeric complexes.

It is found in the cellular thylakoid membrane. Its function is as follows. A core subunit of photosystem II (PSII), probably helps stabilize the reaction center. The sequence is that of Photosystem II reaction center protein Psb30 from Nostoc sp. (strain PCC 7120 / SAG 25.82 / UTEX 2576).